We begin with the raw amino-acid sequence, 129 residues long: Small ribosomal subunit protein uS11 (129 aa).

Belongs to the universal ribosomal protein uS11 family. In terms of assembly, part of the 30S ribosomal subunit. Interacts with proteins S7 and S18. Binds to IF-3.

Functionally, located on the platform of the 30S subunit, it bridges several disparate RNA helices of the 16S rRNA. Forms part of the Shine-Dalgarno cleft in the 70S ribosome. The chain is Small ribosomal subunit protein uS11 from Geobacillus sp. (strain WCH70).